Here is a 1216-residue protein sequence, read N- to C-terminus: 1-phosphatidylinositol 4,5-bisphosphate phosphodiesterase beta-1 (1216 aa).

A lipid anchor (S-palmitoyl cysteine) is attached at Cys17. Phosphoserine is present on Ser236. One can recognise a PI-PLC X-box domain in the interval 316-467 (EDMSQPLSHY…LMYKILVKNK (152 aa)). Active-site residues include His331 and His378. At Ser417 the chain carries Phosphoserine. Positions 469 to 534 (KSHKSSEGSG…MDEGTAGSEA (66 aa)) are disordered. The segment covering 472–483 (KSSEGSGKKKLS) has biased composition (basic and acidic residues). Residues 491–501 (SDSSSVFEPSS) are compositionally biased toward low complexity. Over residues 507 to 518 (ADTESDDDDDDD) the composition is skewed to acidic residues. Thr509 is subject to Phosphothreonine. Residues Ser511 and Ser582 each carry the phosphoserine modification. Positions 540-656 (MSNLVNYIQP…GYRLKPEFMR (117 aa)) constitute a PI-PLC Y-box domain. Residues 656–786 (RRPDKHFDPF…RNERNQPLTL (131 aa)) enclose the C2 domain. Disordered stretches follow at residues 834–891 (DEEE…VKAP), 967–989 (EKSA…GSSA), 1072–1095 (MDKK…EEEK), and 1173–1216 (ISED…DTPL). The span at 846–868 (ETSSEAPSETRTTPAENGVNHTA) shows a compositional bias: polar residues. Ser887 is modified (phosphoserine; by PKC). Basic and acidic residues predominate over residues 967-979 (EKSAKKDSKKKSE). 2 positions are modified to phosphoserine: Ser978 and Ser987. Positions 1075–1095 (KRQEKITEAKSKDKSQMEEEK) are enriched in basic and acidic residues. Ser1197, Ser1199, and Ser1200 each carry phosphoserine. Positions 1205 to 1216 (RENPGREFDTPL) are enriched in basic and acidic residues.

Interacts with DGKQ. Requires Ca(2+) as cofactor. Post-translationally, palmitoylated. Palmitoylation at Cys-17 by ZDHHC21 regulates the signaling activity of PLCB1 and the function of the endothelial barrier. Palmitoylation by ZDHHC21 is stimulated by inflammation.

It is found in the nucleus membrane. Its subcellular location is the cytoplasm. The enzyme catalyses a 1,2-diacyl-sn-glycero-3-phospho-(1D-myo-inositol-4,5-bisphosphate) + H2O = 1D-myo-inositol 1,4,5-trisphosphate + a 1,2-diacyl-sn-glycerol + H(+). It carries out the reaction a 1,2-diacyl-sn-glycero-3-phospho-(1D-myo-inositol) + H2O = 1D-myo-inositol 1-phosphate + a 1,2-diacyl-sn-glycerol + H(+). In terms of biological role, catalyzes the hydrolysis of 1-phosphatidylinositol 4,5-bisphosphate into diacylglycerol (DAG) and inositol 1,4,5-trisphosphate (IP3) and mediates intracellular signaling downstream of G protein-coupled receptors. Regulates the function of the endothelial barrier. This chain is 1-phosphatidylinositol 4,5-bisphosphate phosphodiesterase beta-1, found in Mus musculus (Mouse).